Here is a 695-residue protein sequence, read N- to C-terminus: NAD(P)H-quinone oxidoreductase subunit 5, chloroplastic (695 aa).

Transmembrane regions (helical) follow at residues Trp-1–Phe-21, Trp-32–Ile-52, Ile-81–Ile-101, Phe-117–Ile-137, Ile-139–Thr-159, Gly-177–Phe-197, Asn-211–Ala-231, Thr-250–Ala-270, Val-278–Ala-298, Leu-319–Ile-339, Ala-346–Ser-366, Ile-388–Ser-408, Trp-417–Tyr-437, Leu-535–Phe-555, and Val-594–Ile-614.

Belongs to the complex I subunit 5 family. NDH is composed of at least 16 different subunits, 5 of which are encoded in the nucleus.

The protein resides in the plastid. Its subcellular location is the chloroplast thylakoid membrane. It carries out the reaction a plastoquinone + NADH + (n+1) H(+)(in) = a plastoquinol + NAD(+) + n H(+)(out). It catalyses the reaction a plastoquinone + NADPH + (n+1) H(+)(in) = a plastoquinol + NADP(+) + n H(+)(out). NDH shuttles electrons from NAD(P)H:plastoquinone, via FMN and iron-sulfur (Fe-S) centers, to quinones in the photosynthetic chain and possibly in a chloroplast respiratory chain. The immediate electron acceptor for the enzyme in this species is believed to be plastoquinone. Couples the redox reaction to proton translocation, and thus conserves the redox energy in a proton gradient. The chain is NAD(P)H-quinone oxidoreductase subunit 5, chloroplastic (ndhF) from Capsicum baccatum (Peruvian pepper).